An 882-amino-acid chain; its full sequence is Kelch repeat-containing protein 2 (882 aa).

The segment at 41–60 (TPTLPPNQHRGISGASTALP) is disordered. 6 Kelch repeats span residues 99 to 143 (RIFV…PPRV), 153 to 207 (AYVV…IIAS), 213 to 267 (KLYL…AYDN), 268 to 317 (KLWV…VYKH), 319 to 369 (MCVL…LMKN), and 371 to 417 (KLLI…LCPG). Thr-455 is modified (phosphothreonine). The segment covering 480 to 496 (LDDKAFERKSDREEKKP) has biased composition (basic and acidic residues). Positions 480–516 (LDDKAFERKSDREEKKPQSSKVDSSINKESPGTGIKV) are disordered. The segment covering 498–509 (SSKVDSSINKES) has biased composition (polar residues). Ser-509 is subject to Phosphoserine. Coiled-coil stretches lie at residues 550 to 685 (KNLF…QKIT) and 728 to 881 (NKIE…LEQK).

Interacts with KEL1.

This Saccharomyces cerevisiae (strain ATCC 204508 / S288c) (Baker's yeast) protein is Kelch repeat-containing protein 2 (KEL2).